We begin with the raw amino-acid sequence, 306 residues long: Protein-methionine-sulfoxide reductase catalytic subunit MsrP (306 aa).

Residues 1 to 44 constitute a signal peptide (tat-type signal); that stretch reads MLIRHAPDLTDNDVTGHGLYLRRRDFIGGAAGLGLMAAAGSASA. Mo-molybdopterin contacts are provided by residues asparagine 69, 72-73, cysteine 127, threonine 162, asparagine 210, arginine 215, and 226-228; these read YE and GIK.

This sequence belongs to the MsrP family. As to quaternary structure, heterodimer of a catalytic subunit (MsrP) and a heme-binding subunit (MsrQ). The cofactor is Mo-molybdopterin. Predicted to be exported by the Tat system. The position of the signal peptide cleavage has not been experimentally proven.

It localises to the periplasm. It catalyses the reaction L-methionyl-[protein] + a quinone + H2O = L-methionyl-(S)-S-oxide-[protein] + a quinol. It carries out the reaction L-methionyl-[protein] + a quinone + H2O = L-methionyl-(R)-S-oxide-[protein] + a quinol. Part of the MsrPQ system that repairs oxidized periplasmic proteins containing methionine sulfoxide residues (Met-O), using respiratory chain electrons. Thus protects these proteins from oxidative-stress damage caused by reactive species of oxygen and chlorine generated by the host defense mechanisms. MsrPQ is essential for the maintenance of envelope integrity under bleach stress, rescuing a wide series of structurally unrelated periplasmic proteins from methionine oxidation. The catalytic subunit MsrP is non-stereospecific, being able to reduce both (R-) and (S-) diastereoisomers of methionine sulfoxide. The sequence is that of Protein-methionine-sulfoxide reductase catalytic subunit MsrP from Caulobacter sp. (strain K31).